The primary structure comprises 435 residues: Aspartate aminotransferase (435 aa).

Pyridoxal 5'-phosphate is bound by residues Tyr-69 and Ser-100–Leu-101. Tyr-139–Arg-141 contacts substrate. Residues Asn-189, Tyr-221, and Ser-254–Ser-256 contribute to the pyridoxal 5'-phosphate site. Position 392 (Arg-392) interacts with substrate.

The protein belongs to the class-I pyridoxal-phosphate-dependent aminotransferase family. Pyridoxal 5'-phosphate serves as cofactor.

The enzyme catalyses L-aspartate + 2-oxoglutarate = oxaloacetate + L-glutamate. Its function is as follows. Main aspartate aminotransferase that couples nitrogen assimilation to aspartate synthesis. Has a weak, but significant, side activity toward kynurenine (Kyn). Oxaloacetate and 2-oxoglutarate, but not pyruvate, serve as amino acceptors, while Asp, Glu and Kyn serve as the best amino donors. Essential for axenic growth and survival of M.tuberculosis in macrophages and in mice. The chain is Aspartate aminotransferase from Mycobacterium tuberculosis (strain ATCC 25618 / H37Rv).